The following is a 404-amino-acid chain: Cysteine desulfurase IscS (404 aa).

Residues 75-76, Asn155, Gln183, and 203-205 each bind pyridoxal 5'-phosphate; these read AT and SSH. N6-(pyridoxal phosphate)lysine is present on Lys206. Position 243 (Thr243) interacts with pyridoxal 5'-phosphate. The Cysteine persulfide intermediate role is filled by Cys328. Cys328 provides a ligand contact to [2Fe-2S] cluster.

Belongs to the class-V pyridoxal-phosphate-dependent aminotransferase family. NifS/IscS subfamily. As to quaternary structure, homodimer. Forms a heterotetramer with IscU, interacts with other sulfur acceptors. The cofactor is pyridoxal 5'-phosphate.

The protein resides in the cytoplasm. The enzyme catalyses (sulfur carrier)-H + L-cysteine = (sulfur carrier)-SH + L-alanine. It functions in the pathway cofactor biosynthesis; iron-sulfur cluster biosynthesis. Master enzyme that delivers sulfur to a number of partners involved in Fe-S cluster assembly, tRNA modification or cofactor biosynthesis. Catalyzes the removal of elemental sulfur atoms from cysteine to produce alanine. Functions as a sulfur delivery protein for Fe-S cluster synthesis onto IscU, an Fe-S scaffold assembly protein, as well as other S acceptor proteins. In Haemophilus influenzae (strain PittGG), this protein is Cysteine desulfurase IscS.